The sequence spans 113 residues: Protein FPV195 (113 aa).

This sequence belongs to the poxviruses A31 family.

In Vertebrata (FPV), this protein is Protein FPV195.